A 196-amino-acid polypeptide reads, in one-letter code: MSGAGPASPGRSGSALPLPLPLSLSLTGDRKREVPAAGTLLQPIIKDVGEIYSRLLDHRPVIQGEIRYFVKEFEEKRGLRELRVLENLKKTIFETNEDILPKCKQSMHDNLNEVLQRLQAANDTIHKLQEKEHEKRKIQADKLMAGEEKRIAQQETFLQEQQSKREEVDEEHRKAMERLKEQYSEMEKELAKYVSF.

Positions 103 to 196 (CKQSMHDNLN…EKELAKYVSF (94 aa)) form a coiled coil.

Belongs to the BLOC1S5 family. As to quaternary structure, component of the biogenesis of lysosome-related organelles complex 1 (BLOC-1).

Component of the BLOC-1 complex, a complex that is required for normal biogenesis of lysosome-related organelles (LRO), such as platelet dense granules and melanosomes. Plays a role in intracellular vesicle trafficking. In Gallus gallus (Chicken), this protein is Biogenesis of lysosome-related organelles complex 1 subunit 5 (BLOC1S5).